Reading from the N-terminus, the 336-residue chain is Protein FPV127 (336 aa).

The segment at M1–A22 is disordered.

This sequence belongs to the poxviruses A16/G9/J5 family.

This is Protein FPV127 from Vertebrata (FPV).